The chain runs to 950 residues: Xylosyltransferase 1 (950 aa).

Residues 1 to 17 lie on the Cytoplasmic side of the membrane; the sequence is MVAAPSARRLVRRSHSA. The chain crosses the membrane as a helical; Signal-anchor for type II membrane protein span at residues 18-38; that stretch reads LLAALTVLLLQTLVGWNFSSL. At 39–950 the chain is on the lumenal side; it reads HSGAGERRGG…GAVKPDGRLR (912 aa). A disordered region spans residues 42 to 246; sequence AGERRGGAAA…ELRYDQPPKC (205 aa). Low complexity predominate over residues 91–104; sequence PPARARARALAGCP. A compositionally biased stretch (basic and acidic residues) spans 134–150; the sequence is KVRTDSNNENSVPKDFE. A compositionally biased stretch (polar residues) spans 152-161; sequence VDNSNFAPRT. Positions 166–193 are enriched in basic and acidic residues; sequence HQPELAKKPPSRQKELLKRRLEQEEKGK. A glycan (N-linked (GlcNAc...) asparagine) is linked at Asn-215. Intrachain disulfides connect Cys-246–Cys-274, Cys-290–Cys-531, Cys-550–Cys-563, and Cys-552–Cys-561. Residues Val-322, Asp-350, and 379 to 381 each bind UDP-alpha-D-xylose; that span reads TIW. N-linked (GlcNAc...) asparagine glycosylation occurs at Asn-410. 483-484 provides a ligand contact to UDP-alpha-D-xylose; it reads DW. UDP-alpha-D-xylose-binding positions include Ser-564 and 587-588; that span reads RK. 2 cysteine pairs are disulfide-bonded: Cys-664/Cys-918 and Cys-911/Cys-924. An N-linked (GlcNAc...) asparagine glycan is attached at Asn-768. The tract at residues 931–950 is disordered; sequence SFSPDPKSELGAVKPDGRLR.

This sequence belongs to the glycosyltransferase 14 family. XylT subfamily. As to quaternary structure, monomer. A divalent metal cation is required as a cofactor. Post-translationally, contains 7 disulfide bonds. N-glycosylated.

It is found in the golgi apparatus membrane. The catalysed reaction is UDP-alpha-D-xylose + L-seryl-[protein] = 3-O-(beta-D-xylosyl)-L-seryl-[protein] + UDP + H(+). The protein operates within glycan metabolism; chondroitin sulfate biosynthesis. It functions in the pathway glycan metabolism; heparan sulfate biosynthesis. Catalyzes the first step in the biosynthesis of chondroitin sulfate and dermatan sulfate proteoglycans, such as DCN. Transfers D-xylose from UDP-D-xylose to specific serine residues of the core protein. Required for normal maturation of chondrocytes during bone development, normal onset of ossification and normal embryonic and postnatal skeleton development, especially of the long bones. The protein is Xylosyltransferase 1 (XYLT1) of Canis lupus familiaris (Dog).